The sequence spans 32 residues: Photosystem II reaction center protein T (32 aa).

A helical transmembrane segment spans residues 3-23 (SIAYVLIFACLIGLFFFAIFF).

This sequence belongs to the PsbT family. In terms of assembly, PSII is composed of 1 copy each of membrane proteins PsbA, PsbB, PsbC, PsbD, PsbE, PsbF, PsbH, PsbI, PsbJ, PsbK, PsbL, PsbM, PsbT, PsbX, PsbY, PsbZ, Psb30/Ycf12, peripheral proteins PsbO, CyanoQ (PsbQ), PsbU, PsbV and a large number of cofactors. It forms dimeric complexes.

The protein localises to the cellular thylakoid membrane. Its function is as follows. Found at the monomer-monomer interface of the photosystem II (PS II) dimer, plays a role in assembly and dimerization of PSII. PSII is a light-driven water plastoquinone oxidoreductase, using light energy to abstract electrons from H(2)O, generating a proton gradient subsequently used for ATP formation. This Cyanothece sp. (strain PCC 7425 / ATCC 29141) protein is Photosystem II reaction center protein T.